Here is a 352-residue protein sequence, read N- to C-terminus: Anthranilate phosphoribosyltransferase (352 aa).

5-phospho-alpha-D-ribose 1-diphosphate-binding positions include glycine 94, 97-98 (GS), serine 102, 104-107 (NIST), 122-130 (KHGNRAVSS), and serine 134. Glycine 94 is an anthranilate binding site. Position 106 (serine 106) interacts with Mg(2+). Asparagine 125 provides a ligand contact to anthranilate. Residue arginine 180 coordinates anthranilate. 2 residues coordinate Mg(2+): aspartate 239 and glutamate 240.

The protein belongs to the anthranilate phosphoribosyltransferase family. In terms of assembly, homodimer. It depends on Mg(2+) as a cofactor.

The catalysed reaction is N-(5-phospho-beta-D-ribosyl)anthranilate + diphosphate = 5-phospho-alpha-D-ribose 1-diphosphate + anthranilate. The protein operates within amino-acid biosynthesis; L-tryptophan biosynthesis; L-tryptophan from chorismate: step 2/5. In terms of biological role, catalyzes the transfer of the phosphoribosyl group of 5-phosphorylribose-1-pyrophosphate (PRPP) to anthranilate to yield N-(5'-phosphoribosyl)-anthranilate (PRA). In Geobacter sp. (strain M21), this protein is Anthranilate phosphoribosyltransferase.